The sequence spans 308 residues: Protoheme IX farnesyltransferase (308 aa).

8 helical membrane-spanning segments follow: residues 31-51 (VIEL…RGTV), 53-73 (PLLI…ANTL), 102-122 (HALI…WLST), 124-144 (LLSG…YTML), 149-169 (TSQN…IGWS), 170-190 (AVTG…FFWT), 242-262 (LATG…FLVM), and 288-308 (YLAV…PTLL).

This sequence belongs to the UbiA prenyltransferase family. Protoheme IX farnesyltransferase subfamily.

Its subcellular location is the cell membrane. The enzyme catalyses heme b + (2E,6E)-farnesyl diphosphate + H2O = Fe(II)-heme o + diphosphate. It participates in porphyrin-containing compound metabolism; heme O biosynthesis; heme O from protoheme: step 1/1. Functionally, converts heme B (protoheme IX) to heme O by substitution of the vinyl group on carbon 2 of heme B porphyrin ring with a hydroxyethyl farnesyl side group. The polypeptide is Protoheme IX farnesyltransferase (Mycolicibacterium smegmatis (strain ATCC 700084 / mc(2)155) (Mycobacterium smegmatis)).